The sequence spans 200 residues: NADH-quinone oxidoreductase subunit C (200 aa).

This sequence belongs to the complex I 30 kDa subunit family. In terms of assembly, NDH-1 is composed of 14 different subunits. Subunits NuoB, C, D, E, F, and G constitute the peripheral sector of the complex.

Its subcellular location is the cell inner membrane. The catalysed reaction is a quinone + NADH + 5 H(+)(in) = a quinol + NAD(+) + 4 H(+)(out). Functionally, NDH-1 shuttles electrons from NADH, via FMN and iron-sulfur (Fe-S) centers, to quinones in the respiratory chain. The immediate electron acceptor for the enzyme in this species is believed to be ubiquinone. Couples the redox reaction to proton translocation (for every two electrons transferred, four hydrogen ions are translocated across the cytoplasmic membrane), and thus conserves the redox energy in a proton gradient. The chain is NADH-quinone oxidoreductase subunit C from Ralstonia pickettii (strain 12J).